The chain runs to 195 residues: Granulocyte colony-stimulating factor (195 aa).

Residues 1–21 (MKLMALQLLLWHIALWMVPEA) form the signal peptide. 2 disulfides stabilise this stretch: cysteine 57–cysteine 63 and cysteine 85–cysteine 95. A glycan (O-linked (GalNAc...) threonine) is linked at threonine 154.

The protein belongs to the IL-6 superfamily. In terms of assembly, monomer. Post-translationally, O-glycosylated.

It localises to the secreted. Functionally, granulocyte/macrophage colony-stimulating factors are cytokines that act in hematopoiesis by controlling the production, differentiation, and function of 2 related white cell populations of the blood, the granulocytes and the monocytes-macrophages. This CSF induces granulocytes. In Sus scrofa (Pig), this protein is Granulocyte colony-stimulating factor (CSF3).